Consider the following 558-residue polypeptide: Urocanate hydratase (558 aa).

NAD(+) contacts are provided by residues 53-54 (GG), Q131, 177-179 (GMG), E197, R202, 243-244 (NA), 264-268 (QTSAH), 274-275 (YL), and Y323. C411 is an active-site residue. G493 serves as a coordination point for NAD(+).

It belongs to the urocanase family. NAD(+) is required as a cofactor.

Its subcellular location is the cytoplasm. The catalysed reaction is 4-imidazolone-5-propanoate = trans-urocanate + H2O. The protein operates within amino-acid degradation; L-histidine degradation into L-glutamate; N-formimidoyl-L-glutamate from L-histidine: step 2/3. Functionally, catalyzes the conversion of urocanate to 4-imidazolone-5-propionate. This is Urocanate hydratase from Idiomarina loihiensis (strain ATCC BAA-735 / DSM 15497 / L2-TR).